Reading from the N-terminus, the 405-residue chain is Deoxyguanosinetriphosphate triphosphohydrolase-like protein (405 aa).

The region spanning 75–219 (RLTHTIEVAQ…AAIADDIAYN (145 aa)) is the HD domain.

Belongs to the dGTPase family. Type 2 subfamily.

In Sinorhizobium medicae (strain WSM419) (Ensifer medicae), this protein is Deoxyguanosinetriphosphate triphosphohydrolase-like protein.